Consider the following 462-residue polypeptide: Bifunctional protein GlmU (462 aa).

A pyrophosphorylase region spans residues 1-235 (MSYINFSAII…TFEIMGVNSK (235 aa)). UDP-N-acetyl-alpha-D-glucosamine-binding positions include 11-14 (LAAG), K25, Q80, 85-86 (GT), 107-109 (YGD), G144, E159, and N233. Residue D109 coordinates Mg(2+). Residue N233 coordinates Mg(2+). Positions 236-256 (SDFVDLDKQYQQRKVQCLLSS) are linker. The N-acetyltransferase stretch occupies residues 257 to 462 (GLMIIDPNRF…LNWKRLKNKK (206 aa)). UDP-N-acetyl-alpha-D-glucosamine is bound by residues R339 and K357. The Proton acceptor role is filled by H369. Y372 and N383 together coordinate UDP-N-acetyl-alpha-D-glucosamine. Acetyl-CoA-binding positions include A386, 392 to 393 (NY), A429, and R446.

This sequence in the N-terminal section; belongs to the N-acetylglucosamine-1-phosphate uridyltransferase family. The protein in the C-terminal section; belongs to the transferase hexapeptide repeat family. As to quaternary structure, homotrimer. Mg(2+) serves as cofactor.

It is found in the cytoplasm. The enzyme catalyses alpha-D-glucosamine 1-phosphate + acetyl-CoA = N-acetyl-alpha-D-glucosamine 1-phosphate + CoA + H(+). The catalysed reaction is N-acetyl-alpha-D-glucosamine 1-phosphate + UTP + H(+) = UDP-N-acetyl-alpha-D-glucosamine + diphosphate. The protein operates within nucleotide-sugar biosynthesis; UDP-N-acetyl-alpha-D-glucosamine biosynthesis; N-acetyl-alpha-D-glucosamine 1-phosphate from alpha-D-glucosamine 6-phosphate (route II): step 2/2. Its pathway is nucleotide-sugar biosynthesis; UDP-N-acetyl-alpha-D-glucosamine biosynthesis; UDP-N-acetyl-alpha-D-glucosamine from N-acetyl-alpha-D-glucosamine 1-phosphate: step 1/1. It participates in bacterial outer membrane biogenesis; LPS lipid A biosynthesis. Catalyzes the last two sequential reactions in the de novo biosynthetic pathway for UDP-N-acetylglucosamine (UDP-GlcNAc). The C-terminal domain catalyzes the transfer of acetyl group from acetyl coenzyme A to glucosamine-1-phosphate (GlcN-1-P) to produce N-acetylglucosamine-1-phosphate (GlcNAc-1-P), which is converted into UDP-GlcNAc by the transfer of uridine 5-monophosphate (from uridine 5-triphosphate), a reaction catalyzed by the N-terminal domain. The chain is Bifunctional protein GlmU from Blochmanniella pennsylvanica (strain BPEN).